The primary structure comprises 258 residues: Ribosomal RNA small subunit methyltransferase A (258 aa).

The S-adenosyl-L-methionine site is built by His13, Leu15, Gly40, Glu62, Asp87, and Asn108.

It belongs to the class I-like SAM-binding methyltransferase superfamily. rRNA adenine N(6)-methyltransferase family. RsmA subfamily.

It localises to the cytoplasm. The catalysed reaction is adenosine(1518)/adenosine(1519) in 16S rRNA + 4 S-adenosyl-L-methionine = N(6)-dimethyladenosine(1518)/N(6)-dimethyladenosine(1519) in 16S rRNA + 4 S-adenosyl-L-homocysteine + 4 H(+). Functionally, specifically dimethylates two adjacent adenosines (A1518 and A1519) in the loop of a conserved hairpin near the 3'-end of 16S rRNA in the 30S particle. May play a critical role in biogenesis of 30S subunits. This chain is Ribosomal RNA small subunit methyltransferase A, found in Sulfurihydrogenibium sp. (strain YO3AOP1).